The sequence spans 54 residues: Rubredoxin (54 aa).

The 54-residue stretch at 1–54 (MKKYQCIVCGWIYDEAEGWPQDGIAPGTKWEDIPDDWTCPDCGVSKVDFEMIEV) folds into the Rubredoxin-like domain. Fe cation is bound by residues Cys6, Cys9, Cys39, and Cys42.

This sequence belongs to the rubredoxin family. Requires Fe(3+) as cofactor.

The protein resides in the cytoplasm. The protein operates within hydrocarbon metabolism; alkane degradation. Its function is as follows. Involved in the hydrocarbon hydroxylating system, which transfers electrons from NADH to rubredoxin reductase and then through rubredoxin to alkane 1 monooxygenase. This is Rubredoxin (rubA) from Acinetobacter baylyi (strain ATCC 33305 / BD413 / ADP1).